A 290-amino-acid polypeptide reads, in one-letter code: ATP synthase gamma chain (290 aa).

This sequence belongs to the ATPase gamma chain family. In terms of assembly, F-type ATPases have 2 components, CF(1) - the catalytic core - and CF(0) - the membrane proton channel. CF(1) has five subunits: alpha(3), beta(3), gamma(1), delta(1), epsilon(1). CF(0) has three main subunits: a, b and c.

The protein resides in the cell inner membrane. Its function is as follows. Produces ATP from ADP in the presence of a proton gradient across the membrane. The gamma chain is believed to be important in regulating ATPase activity and the flow of protons through the CF(0) complex. This Chlorobium luteolum (strain DSM 273 / BCRC 81028 / 2530) (Pelodictyon luteolum) protein is ATP synthase gamma chain.